A 266-amino-acid chain; its full sequence is Isoprenyl transferase (266 aa).

The active site involves Asp36. Asp36 serves as a coordination point for Mg(2+). Residues 37–40 (GNGR), Trp41, Arg49, His53, and 81–83 (STE) each bind substrate. The active-site Proton acceptor is Asn84. Substrate contacts are provided by residues Trp85, Arg87, Arg204, and 210–212 (RIS). Glu223 is a Mg(2+) binding site.

Belongs to the UPP synthase family. As to quaternary structure, homodimer. The cofactor is Mg(2+).

Its function is as follows. Catalyzes the condensation of isopentenyl diphosphate (IPP) with allylic pyrophosphates generating different type of terpenoids. The chain is Isoprenyl transferase from Prochlorococcus marinus (strain SARG / CCMP1375 / SS120).